A 308-amino-acid chain; its full sequence is Oxygen-dependent coproporphyrinogen-III oxidase (308 aa).

A substrate-binding site is contributed by Ser100. The a divalent metal cation site is built by His104 and His114. Residue His114 is the Proton donor of the active site. Residue Asn116–Arg118 coordinates substrate. The a divalent metal cation site is built by His153 and His183. Residues Tyr248 to Lys283 form an important for dimerization region. Gly266 to Arg268 contributes to the substrate binding site.

The protein belongs to the aerobic coproporphyrinogen-III oxidase family. As to quaternary structure, homodimer. It depends on a divalent metal cation as a cofactor.

It localises to the cytoplasm. It catalyses the reaction coproporphyrinogen III + O2 + 2 H(+) = protoporphyrinogen IX + 2 CO2 + 2 H2O. The protein operates within porphyrin-containing compound metabolism; protoporphyrin-IX biosynthesis; protoporphyrinogen-IX from coproporphyrinogen-III (O2 route): step 1/1. Involved in the heme biosynthesis. Catalyzes the aerobic oxidative decarboxylation of propionate groups of rings A and B of coproporphyrinogen-III to yield the vinyl groups in protoporphyrinogen-IX. The chain is Oxygen-dependent coproporphyrinogen-III oxidase from Francisella tularensis subsp. tularensis (strain FSC 198).